The chain runs to 565 residues: Adenine deaminase (565 aa).

The protein belongs to the metallo-dependent hydrolases superfamily. Adenine deaminase family. The cofactor is Mn(2+).

The catalysed reaction is adenine + H2O + H(+) = hypoxanthine + NH4(+). In Sinorhizobium fredii (strain NBRC 101917 / NGR234), this protein is Adenine deaminase.